The chain runs to 379 residues: Cytochrome b (379 aa).

4 helical membrane-spanning segments follow: residues 34–54, 78–99, 114–134, and 179–199; these read FGSL…LLAT, WLIR…YLHI, WNIG…GYVL, and FFAL…IHLT. Residues His84 and His98 each contribute to the heme b site. Heme b-binding residues include His183 and His197. Residue His202 coordinates a ubiquinone. 4 consecutive transmembrane segments (helical) span residues 227-247, 289-309, 321-341, and 348-368; these read TKDM…AFFF, LGGV…PLLH, MSQL…WIGS, and FIII…FLFP.

The protein belongs to the cytochrome b family. The cytochrome bc1 complex contains 11 subunits: 3 respiratory subunits (MT-CYB, CYC1 and UQCRFS1), 2 core proteins (UQCRC1 and UQCRC2) and 6 low-molecular weight proteins (UQCRH/QCR6, UQCRB/QCR7, UQCRQ/QCR8, UQCR10/QCR9, UQCR11/QCR10 and a cleavage product of UQCRFS1). This cytochrome bc1 complex then forms a dimer. Heme b is required as a cofactor.

Its subcellular location is the mitochondrion inner membrane. Its function is as follows. Component of the ubiquinol-cytochrome c reductase complex (complex III or cytochrome b-c1 complex) that is part of the mitochondrial respiratory chain. The b-c1 complex mediates electron transfer from ubiquinol to cytochrome c. Contributes to the generation of a proton gradient across the mitochondrial membrane that is then used for ATP synthesis. In Tinamus major (Great tinamou), this protein is Cytochrome b (MT-CYB).